Here is a 1835-residue protein sequence, read N- to C-terminus: Urea amidolyase (1835 aa).

Residues 122-129 (GAIIVGKT) and Lys747 each bind ATP. The Biotin carboxylation domain occupies 632-1075 (LFDTVLIANR…STNILNSYQY (444 aa)). The ATP-grasp domain occupies 751–948 (RQIAQKAGVP…LVEWMIRIAA (198 aa)). Phosphoserine is present on Ser803. Glu830 and Asn865 together coordinate ATP. Residues 1754 to 1832 (DEEEDFPEGA…DSGDIVAVIE (79 aa)) form the Biotinyl-binding domain. An N6-biotinyllysine modification is found at Lys1798.

As to quaternary structure, monomer. Requires biotin as cofactor.

The catalysed reaction is urea + hydrogencarbonate + ATP = urea-1-carboxylate + ADP + phosphate + H(+). It catalyses the reaction urea-1-carboxylate + H2O + 3 H(+) = 2 NH4(+) + 2 CO2. The protein operates within nitrogen metabolism; urea degradation; CO(2) and NH(3) from urea (allophanate route): step 1/2. It functions in the pathway nitrogen metabolism; urea degradation; CO(2) and NH(3) from urea (allophanate route): step 2/2. Hydrolysis of urea to ammonia and CO(2). The chain is Urea amidolyase (DUR1,2) from Saccharomyces cerevisiae (strain ATCC 204508 / S288c) (Baker's yeast).